We begin with the raw amino-acid sequence, 197 residues long: Holliday junction branch migration complex subunit RuvA (197 aa).

The interval 1 to 63 (MIEFIRGYVD…EDVLALYGFH (63 aa)) is domain I. Positions 64 to 142 (TRQERMLFAK…AIVPDAFPNL (79 aa)) are domain II. The tract at residues 143-149 (FTEPLEE) is flexible linker. The tract at residues 149-197 (ETNALSEAIEALKALGYADKEIQKVVPMLRQERLSTEGYIKLALQKLLK) is domain III.

This sequence belongs to the RuvA family. As to quaternary structure, homotetramer. Forms an RuvA(8)-RuvB(12)-Holliday junction (HJ) complex. HJ DNA is sandwiched between 2 RuvA tetramers; dsDNA enters through RuvA and exits via RuvB. An RuvB hexamer assembles on each DNA strand where it exits the tetramer. Each RuvB hexamer is contacted by two RuvA subunits (via domain III) on 2 adjacent RuvB subunits; this complex drives branch migration. In the full resolvosome a probable DNA-RuvA(4)-RuvB(12)-RuvC(2) complex forms which resolves the HJ.

It localises to the cytoplasm. Its function is as follows. The RuvA-RuvB-RuvC complex processes Holliday junction (HJ) DNA during genetic recombination and DNA repair, while the RuvA-RuvB complex plays an important role in the rescue of blocked DNA replication forks via replication fork reversal (RFR). RuvA specifically binds to HJ cruciform DNA, conferring on it an open structure. The RuvB hexamer acts as an ATP-dependent pump, pulling dsDNA into and through the RuvAB complex. HJ branch migration allows RuvC to scan DNA until it finds its consensus sequence, where it cleaves and resolves the cruciform DNA. In Anoxybacillus flavithermus (strain DSM 21510 / WK1), this protein is Holliday junction branch migration complex subunit RuvA.